Reading from the N-terminus, the 69-residue chain is Cytochrome c oxidase subunit 8A, mitochondrial (69 aa).

The N-terminal 25 residues, methionine 1–lysine 25, are a transit peptide targeting the mitochondrion. The SIFI-degron signature appears at serine 2–leucine 19. At valine 26–glycine 36 the chain is on the mitochondrial matrix side. The helical transmembrane segment at isoleucine 37–serine 60 threads the bilayer. Over histidine 61–glutamate 69 the chain is Mitochondrial intermembrane.

Belongs to the cytochrome c oxidase VIII family. Component of the cytochrome c oxidase (complex IV, CIV), a multisubunit enzyme composed of 14 subunits. The complex is composed of a catalytic core of 3 subunits MT-CO1, MT-CO2 and MT-CO3, encoded in the mitochondrial DNA, and 11 supernumerary subunits COX4I, COX5A, COX5B, COX6A, COX6B, COX6C, COX7A, COX7B, COX7C, COX8 and NDUFA4, which are encoded in the nuclear genome. The complex exists as a monomer or a dimer and forms supercomplexes (SCs) in the inner mitochondrial membrane with NADH-ubiquinone oxidoreductase (complex I, CI) and ubiquinol-cytochrome c oxidoreductase (cytochrome b-c1 complex, complex III, CIII), resulting in different assemblies (supercomplex SCI(1)III(2)IV(1) and megacomplex MCI(2)III(2)IV(2)). In response to mitochondrial stress, the precursor protein is ubiquitinated by the SIFI complex in the cytoplasm before mitochondrial import, leading to its degradation. Within the SIFI complex, UBR4 initiates ubiquitin chain that are further elongated or branched by KCMF1.

The protein localises to the mitochondrion inner membrane. The protein operates within energy metabolism; oxidative phosphorylation. Component of the cytochrome c oxidase, the last enzyme in the mitochondrial electron transport chain which drives oxidative phosphorylation. The respiratory chain contains 3 multisubunit complexes succinate dehydrogenase (complex II, CII), ubiquinol-cytochrome c oxidoreductase (cytochrome b-c1 complex, complex III, CIII) and cytochrome c oxidase (complex IV, CIV), that cooperate to transfer electrons derived from NADH and succinate to molecular oxygen, creating an electrochemical gradient over the inner membrane that drives transmembrane transport and the ATP synthase. Cytochrome c oxidase is the component of the respiratory chain that catalyzes the reduction of oxygen to water. Electrons originating from reduced cytochrome c in the intermembrane space (IMS) are transferred via the dinuclear copper A center (CU(A)) of subunit 2 and heme A of subunit 1 to the active site in subunit 1, a binuclear center (BNC) formed by heme A3 and copper B (CU(B)). The BNC reduces molecular oxygen to 2 water molecules using 4 electrons from cytochrome c in the IMS and 4 protons from the mitochondrial matrix. The chain is Cytochrome c oxidase subunit 8A, mitochondrial (COX8A) from Macaca silenus (Lion-tailed macaque).